The chain runs to 527 residues: Probable malate:quinone oxidoreductase 2 (527 aa).

Belongs to the MQO family. It depends on FAD as a cofactor.

It catalyses the reaction (S)-malate + a quinone = a quinol + oxaloacetate. It functions in the pathway carbohydrate metabolism; tricarboxylic acid cycle; oxaloacetate from (S)-malate (quinone route): step 1/1. The protein is Probable malate:quinone oxidoreductase 2 of Pseudomonas putida (strain ATCC 47054 / DSM 6125 / CFBP 8728 / NCIMB 11950 / KT2440).